The following is a 183-amino-acid chain: uncharacterized protein (183 aa).

The protein belongs to the isochorismatase family.

This is an uncharacterized protein from Bacillus subtilis (strain 168).